A 349-amino-acid chain; its full sequence is Zinc-type alcohol dehydrogenase-like protein PB24D3.08c (349 aa).

It belongs to the zinc-containing alcohol dehydrogenase family. Quinone oxidoreductase subfamily.

Its subcellular location is the cytoplasm. The protein localises to the nucleus. The chain is Zinc-type alcohol dehydrogenase-like protein PB24D3.08c from Schizosaccharomyces pombe (strain 972 / ATCC 24843) (Fission yeast).